Here is a 325-residue protein sequence, read N- to C-terminus: Elongation factor P--(R)-beta-lysine ligase (325 aa).

76 to 78 (SPE) serves as a coordination point for substrate. ATP is bound by residues 100–102 (RNE) and N109. Substrate is bound at residue Y118. Residue 244–245 (EL) coordinates ATP. Residue E251 coordinates substrate. G300 provides a ligand contact to ATP.

This sequence belongs to the class-II aminoacyl-tRNA synthetase family. EpmA subfamily. As to quaternary structure, homodimer.

It carries out the reaction D-beta-lysine + L-lysyl-[protein] + ATP = N(6)-((3R)-3,6-diaminohexanoyl)-L-lysyl-[protein] + AMP + diphosphate + H(+). Functionally, with EpmB is involved in the beta-lysylation step of the post-translational modification of translation elongation factor P (EF-P). Catalyzes the ATP-dependent activation of (R)-beta-lysine produced by EpmB, forming a lysyl-adenylate, from which the beta-lysyl moiety is then transferred to the epsilon-amino group of a conserved specific lysine residue in EF-P. The protein is Elongation factor P--(R)-beta-lysine ligase of Photorhabdus laumondii subsp. laumondii (strain DSM 15139 / CIP 105565 / TT01) (Photorhabdus luminescens subsp. laumondii).